The chain runs to 66 residues: Nigrocin-2ISa (66 aa).

The signal sequence occupies residues 1-22 (MFTLKKSMLLLFFLGTINLSLC). A propeptide spans 23–43 (QEERDAEEERRDEDNAKMEEI) (removed in mature form). A disulfide bridge links cysteine 60 with cysteine 66.

Expressed by the skin glands.

Its subcellular location is the secreted. Functionally, has antimicrobial activity against Gram-negative bacterium E.coli ATCC 8739 (MIC=25 ug), against Gram positive bacteria S.aureus ATCC 6538 (MIC=3.1 ug), methicillin-resistant S.aureus ATCC 43300 (MIC=12.5 ug), B.subtilis ATCC 6633 (MIC=12.5 ug) and against fungus C.albicans ATCC 90028 (MIC=50 ug). This Odorrana ishikawae (Ishikawa's frog) protein is Nigrocin-2ISa.